The following is a 304-amino-acid chain: Phosphoribosylaminoimidazole-succinocarboxamide synthase (304 aa).

Belongs to the SAICAR synthetase family.

The catalysed reaction is 5-amino-1-(5-phospho-D-ribosyl)imidazole-4-carboxylate + L-aspartate + ATP = (2S)-2-[5-amino-1-(5-phospho-beta-D-ribosyl)imidazole-4-carboxamido]succinate + ADP + phosphate + 2 H(+). It participates in purine metabolism; IMP biosynthesis via de novo pathway; 5-amino-1-(5-phospho-D-ribosyl)imidazole-4-carboxamide from 5-amino-1-(5-phospho-D-ribosyl)imidazole-4-carboxylate: step 1/2. In Streptomyces griseus subsp. griseus (strain JCM 4626 / CBS 651.72 / NBRC 13350 / KCC S-0626 / ISP 5235), this protein is Phosphoribosylaminoimidazole-succinocarboxamide synthase.